The following is a 239-amino-acid chain: Small ribosomal subunit protein uS2 (239 aa).

Belongs to the universal ribosomal protein uS2 family.

The polypeptide is Small ribosomal subunit protein uS2 (Francisella tularensis subsp. novicida (strain U112)).